We begin with the raw amino-acid sequence, 436 residues long: 3-ketoacyl-CoA thiolase (436 aa).

The Acyl-thioester intermediate role is filled by C99. Residues H392 and C422 each act as proton acceptor in the active site.

Belongs to the thiolase-like superfamily. Thiolase family. Heterotetramer of two alpha chains (FadJ) and two beta chains (FadI).

The protein localises to the cytoplasm. It catalyses the reaction an acyl-CoA + acetyl-CoA = a 3-oxoacyl-CoA + CoA. It functions in the pathway lipid metabolism; fatty acid beta-oxidation. Catalyzes the final step of fatty acid oxidation in which acetyl-CoA is released and the CoA ester of a fatty acid two carbons shorter is formed. This is 3-ketoacyl-CoA thiolase from Shewanella woodyi (strain ATCC 51908 / MS32).